Reading from the N-terminus, the 242-residue chain is Probable transcriptional regulatory protein Dred_1658 (242 aa).

Belongs to the TACO1 family.

Its subcellular location is the cytoplasm. The polypeptide is Probable transcriptional regulatory protein Dred_1658 (Desulforamulus reducens (strain ATCC BAA-1160 / DSM 100696 / MI-1) (Desulfotomaculum reducens)).